A 1381-amino-acid chain; its full sequence is Hepatocyte growth factor receptor (1381 aa).

Residues 1–24 (MKAPAVLAPGILVLLFTLVQRSNG) form the signal peptide. At 25-934 (ECKEALTKSE…VQPDQNFTGL (910 aa)) the chain is on the extracellular side. Positions 27–515 (KEALTKSEMN…TGKKITKIPL (489 aa)) constitute a Sema domain. The N-linked (GlcNAc...) asparagine glycan is linked to asparagine 45. Disulfide bonds link cysteine 95–cysteine 101, cysteine 98–cysteine 160, cysteine 133–cysteine 141, and cysteine 172–cysteine 175. Residue asparagine 106 is glycosylated (N-linked (GlcNAc...) asparagine). Asparagine 149 carries N-linked (GlcNAc...) asparagine glycosylation. Asparagine 202 is a glycosylation site (N-linked (GlcNAc...) asparagine). 2 cysteine pairs are disulfide-bonded: cysteine 298-cysteine 363 and cysteine 385-cysteine 397. An N-linked (GlcNAc...) asparagine glycan is attached at asparagine 399. Cystine bridges form between cysteine 520/cysteine 538, cysteine 526/cysteine 561, cysteine 529/cysteine 545, and cysteine 541/cysteine 551. IPT/TIG domains lie at 563-655 (PAIY…FSYV), 657-739 (PIIT…FSYL), and 742-836 (PIVY…LIYV). Threonine 582 carries O-linked (Man) threonine glycosylation. N-linked (GlcNAc...) asparagine glycosylation is found at asparagine 607 and asparagine 635. Residues threonine 676 and threonine 761 are each glycosylated (O-linked (Man) threonine). N-linked (GlcNAc...) asparagine glycans are attached at residues asparagine 785, asparagine 879, and asparagine 930. The helical transmembrane segment at 935–955 (IAGVVSISIALLLLLAFFLWL) threads the bilayer. The Cytoplasmic portion of the chain corresponds to 956–1381 (KKRKQIKDLG…QDNADGEVDT (426 aa)). Position 966 is a phosphoserine (serine 966). The residue at position 977 (threonine 977) is a Phosphothreonine. Serine 990, serine 997, and serine 1000 each carry phosphoserine. Tyrosine 1003 carries the post-translational modification Phosphotyrosine. Residues 1078–1345 (VHFNEVIGRG…RISAIFSTFI (268 aa)) form the Protein kinase domain. ATP-binding positions include 1084–1092 (IGRGHFGCV) and lysine 1110. The active-site Proton acceptor is aspartate 1204. Positions 1212-1381 (LDEKFTVKVA…QDNADGEVDT (170 aa)) are interaction with RANBP9. Tyrosine 1230 is modified (phosphotyrosine). 2 positions are modified to phosphotyrosine; by autocatalysis: tyrosine 1234 and tyrosine 1235. Threonine 1289 carries the post-translational modification Phosphothreonine. Positions 1320–1359 (WHPKAEMRPSFSELVSRISAIFSTFIGEHYVHVNATYVNV) are interaction with MUC20. 2 positions are modified to phosphotyrosine; by autocatalysis: tyrosine 1349 and tyrosine 1356. Tyrosine 1365 carries the phosphotyrosine modification.

This sequence belongs to the protein kinase superfamily. Tyr protein kinase family. In terms of assembly, heterodimer made of an alpha chain (50 kDa) and a beta chain (145 kDa) which are disulfide linked. Binds PLXNB1. Interacts when phosphorylated with downstream effectors including STAT3, PIK3R1, SRC, PCLG1, GRB2 and GAB1. Interacts with SPSB1, SPSB2 and SPSB4. Interacts with INPP5D/SHIP1. When phosphorylated at Tyr-1356, interacts with INPPL1/SHIP2. Interacts with RANBP9 and RANBP10, as well as SPSB1, SPSB2, SPSB3 and SPSB4. SPSB1 binding occurs in the presence and in the absence of HGF, however HGF treatment has a positive effect on this interaction. Interacts with MUC20; prevents interaction with GRB2 and suppresses hepatocyte growth factor-induced cell proliferation. Interacts with GRB10. Interacts with PTPN1 and PTPN2. Interacts with HSP90AA1 and HSP90AB1; the interaction suppresses MET kinase activity. Interacts with tensin TNS3. Interacts (when phosphorylated) with tensin TNS4 (via SH2 domain); the interaction increases MET protein stability by inhibiting MET endocytosis and subsequent lysosomal degradation. In terms of processing, autophosphorylated in response to ligand binding on Tyr-1234 and Tyr-1235 in the kinase domain leading to further phosphorylation of Tyr-1349 and Tyr-1356 in the C-terminal multifunctional docking site. Dephosphorylated by PTPRJ at Tyr-1349 and Tyr-1365. Dephosphorylated by PTPN1 and PTPN2. Post-translationally, ubiquitinated. Ubiquitination by CBL regulates the receptor stability and activity through proteasomal degradation. O-mannosylation of IPT/TIG domains by TMEM260 is required for protein maturation. O-mannosylated residues are composed of single mannose glycans that are not elongated or modified.

Its subcellular location is the membrane. It carries out the reaction L-tyrosyl-[protein] + ATP = O-phospho-L-tyrosyl-[protein] + ADP + H(+). With respect to regulation, in its inactive state, the C-terminal tail interacts with the catalytic domain and inhibits the kinase activity. Upon ligand binding, the C-terminal tail is displaced and becomes phosphorylated, thus increasing the kinase activity. In terms of biological role, receptor tyrosine kinase that transduces signals from the extracellular matrix into the cytoplasm by binding to hepatocyte growth factor/HGF ligand. Regulates many physiological processes including proliferation, scattering, morphogenesis and survival. Ligand binding at the cell surface induces autophosphorylation of MET on its intracellular domain that provides docking sites for downstream signaling molecules. Following activation by ligand, interacts with the PI3-kinase subunit PIK3R1, PLCG1, SRC, GRB2, STAT3 or the adapter GAB1. Recruitment of these downstream effectors by MET leads to the activation of several signaling cascades including the RAS-ERK, PI3 kinase-AKT, or PLCgamma-PKC. The RAS-ERK activation is associated with the morphogenetic effects while PI3K/AKT coordinates prosurvival effects. During embryonic development, MET signaling plays a role in gastrulation, development and migration of muscles and neuronal precursors, angiogenesis and kidney formation. In adults, participates in wound healing as well as organ regeneration and tissue remodeling. Also promotes differentiation and proliferation of hematopoietic cells. This Plecturocebus moloch (Dusky titi monkey) protein is Hepatocyte growth factor receptor (MET).